We begin with the raw amino-acid sequence, 129 residues long: Small ribosomal subunit protein uS8 (129 aa).

It belongs to the universal ribosomal protein uS8 family. Part of the 30S ribosomal subunit. Contacts proteins S5 and S12.

Functionally, one of the primary rRNA binding proteins, it binds directly to 16S rRNA central domain where it helps coordinate assembly of the platform of the 30S subunit. This Legionella pneumophila (strain Corby) protein is Small ribosomal subunit protein uS8.